The following is a 430-amino-acid chain: Enolase (430 aa).

(2R)-2-phosphoglycerate is bound at residue Gln165. The active-site Proton donor is the Glu207. Mg(2+) contacts are provided by Asp244, Glu287, and Asp314. (2R)-2-phosphoglycerate is bound by residues Lys339, Arg368, Ser369, and Lys390. Catalysis depends on Lys339, which acts as the Proton acceptor.

The protein belongs to the enolase family. As to quaternary structure, component of the RNA degradosome, a multiprotein complex involved in RNA processing and mRNA degradation. The cofactor is Mg(2+).

Its subcellular location is the cytoplasm. The protein localises to the secreted. It is found in the cell surface. It carries out the reaction (2R)-2-phosphoglycerate = phosphoenolpyruvate + H2O. It functions in the pathway carbohydrate degradation; glycolysis; pyruvate from D-glyceraldehyde 3-phosphate: step 4/5. Functionally, catalyzes the reversible conversion of 2-phosphoglycerate (2-PG) into phosphoenolpyruvate (PEP). It is essential for the degradation of carbohydrates via glycolysis. The chain is Enolase from Xylella fastidiosa (strain 9a5c).